We begin with the raw amino-acid sequence, 314 residues long: MEKVFSDEEISGNHHWSVNGMTSLNRSASEWAFNRFIQESSAAADDGESTTACGVSVSSPPNVPVDSEEYRAFLKSKLNLACAAVAMKRGTFIKPQDTSGRSDNGGANESEQASLASSKATPMMSSAITSGSELSGDEEEADGETNMNPTNVKRVKRMLSNRESARRSRRRKQAHLSELETQVSQLRVENSKLMKGLTDVTQTFNDASVENRVLKANIETLRAKVKMAEETVKRLTGFNPMFHNMPQIVSTVSLPSETSNSPDTTSSQVTTPEIISSGNKGKALIGCKMNRTASMRRVESLEHLQKRIRSVGDQ.

Residue Ser-29 is modified to Phosphoserine; by KIN10. The disordered stretch occupies residues 94–177; sequence KPQDTSGRSD…SRRRKQAHLS (84 aa). Residues 96 to 133 show a composition bias toward polar residues; the sequence is QDTSGRSDNGGANESEQASLASSKATPMMSSAITSGSE. The region spanning 151–214 is the bZIP domain; that stretch reads NVKRVKRMLS…NDASVENRVL (64 aa). A basic motif region spans residues 153–172; that stretch reads KRVKRMLSNRESARRSRRRK. Positions 155–162 match the Nuclear localization signal 1 motif; sequence VKRMLSNR. Positions 179–193 are leucine-zipper; it reads LETQVSQLRVENSKL. The disordered stretch occupies residues 253–274; the sequence is SLPSETSNSPDTTSSQVTTPEI. 2 positions are modified to phosphoserine; by KIN10: Ser-294 and Ser-300. A Nuclear localization signal 2 motif is present at residues 295–302; sequence MRRVESLE.

Belongs to the bZIP family. Homodimer. Forms a heterodimer with LSD1, BZIP1, BZIP2, BZIP9, BZIP10, BZIP11, BZIP25, BZIP44 and BZIP53. Interacts with KIN10 and SNF4. Component of a ternary complex composed of BZIP2-BZIP63 heterodimer and KIN10. In terms of processing, phosphorylated. The phosphorylation at Ser-29, Ser-294 and Ser-300 by KIN10 strongly enhances its ability to form homo- as well as heterodimers and are then essential for its transcriptional activity. In terms of tissue distribution, expressed in roots, shoots, young leaves, pollen, and flowers.

It localises to the nucleus. Up-regulated by KIN10 under a phosphorylation-dependent manner. Transcription factor involved in controlling responses to starvation. BZIP2-BZIP63-KIN10 complex binds to the ETFQO promoter to up-regulate its transcription. The polypeptide is Basic leucine zipper 63 (BZIP63) (Arabidopsis thaliana (Mouse-ear cress)).